We begin with the raw amino-acid sequence, 213 residues long: Protein DMP4 (213 aa).

The next 4 helical transmembrane spans lie at 51-71 (LANL…PIFS), 78-98 (LVSK…CFIL), 142-162 (FIDF…VLFD), and 180-200 (VLTA…ATFP).

This sequence belongs to the plant DMP1 protein family. Expressed in leaves, flowers and siliques, especially in vascular tissues.

The protein resides in the vacuole membrane. Involved in membrane remodeling. In Arabidopsis thaliana (Mouse-ear cress), this protein is Protein DMP4.